We begin with the raw amino-acid sequence, 121 residues long: MDKILGASFLVLWLQLCWVSGQQKEKSDQQQVKQSPQSLIVQKGGISIINCAYENTAFDYFPWYQQFPGKGPALLIAIRPDVSEKKEGRFTISFNKSAKQFSSHIMDSQPGDSATYFCAAS.

A signal peptide spans 1-21 (MDKILGASFLVLWLQLCWVSG). Positions 30-121 (QQVKQSPQSL…DSATYFCAAS (92 aa)) constitute an Ig-like domain. Cys51 and Cys118 are oxidised to a cystine. Asn95 is a glycosylation site (N-linked (GlcNAc...) asparagine).

In terms of assembly, alpha-beta TR is a heterodimer composed of an alpha and beta chain; disulfide-linked. The alpha-beta TR is associated with the transmembrane signaling CD3 coreceptor proteins to form the TR-CD3 (TcR or TCR). The assembly of alpha-beta TR heterodimers with CD3 occurs in the endoplasmic reticulum where a single alpha-beta TR heterodimer associates with one CD3D-CD3E heterodimer, one CD3G-CD3E heterodimer and one CD247 homodimer forming a stable octameric structure. CD3D-CD3E and CD3G-CD3E heterodimers preferentially associate with TR alpha and TR beta chains, respectively. The association of the CD247 homodimer is the last step of TcR assembly in the endoplasmic reticulum and is required for transport to the cell surface.

The protein resides in the cell membrane. Functionally, v region of the variable domain of T cell receptor (TR) alpha chain that participates in the antigen recognition. Alpha-beta T cell receptors are antigen specific receptors which are essential to the immune response and are present on the cell surface of T lymphocytes. Recognize peptide-major histocompatibility (MH) (pMH) complexes that are displayed by antigen presenting cells (APC), a prerequisite for efficient T cell adaptive immunity against pathogens. Binding of alpha-beta TR to pMH complex initiates TR-CD3 clustering on the cell surface and intracellular activation of LCK that phosphorylates the ITAM motifs of CD3G, CD3D, CD3E and CD247 enabling the recruitment of ZAP70. In turn ZAP70 phosphorylates LAT, which recruits numerous signaling molecules to form the LAT signalosome. The LAT signalosome propagates signal branching to three major signaling pathways, the calcium, the mitogen-activated protein kinase (MAPK) kinase and the nuclear factor NF-kappa-B (NF-kB) pathways, leading to the mobilization of transcription factors that are critical for gene expression and essential for T cell growth and differentiation. The T cell repertoire is generated in the thymus, by V-(D)-J rearrangement. This repertoire is then shaped by intrathymic selection events to generate a peripheral T cell pool of self-MH restricted, non-autoaggressive T cells. Post-thymic interaction of alpha-beta TR with the pMH complexes shapes TR structural and functional avidity. This is T cell receptor alpha variable 23/delta variable 6 from Homo sapiens (Human).